The sequence spans 510 residues: Flavonoid 3',5'-hydroxylase (510 aa).

C447 serves as a coordination point for heme.

It belongs to the cytochrome P450 family. The cofactor is heme.

It carries out the reaction a 3',5'-unsubstituted flavanone + 2 reduced [NADPH--hemoprotein reductase] + 2 O2 = a 3',5'-dihydroxyflavanone + 2 oxidized [NADPH--hemoprotein reductase] + 2 H2O + 2 H(+). It participates in pigment biosynthesis; anthocyanin biosynthesis. Catalyzes the 3'5'-hydroxylation of naringenin and eriodictyol to form 5,7,3,'4',5'-pentahydroxyflavanone and 3',5'-hydroxylation of dihydrokaempferol and dihydroquercetin to form dihydromyricetin. In Eustoma exaltatum subsp. russellianum (Bluebells), this protein is Flavonoid 3',5'-hydroxylase (CYP75A7).